The primary structure comprises 107 residues: Integration host factor subunit beta (107 aa).

A disordered region spans residues 55-107; sequence RRPARVGRNPKSGEKVQVPEKHVPHFKPGKELRERVDGRAGEPLKNDEPEDAQ. Positions 65–101 are enriched in basic and acidic residues; sequence KSGEKVQVPEKHVPHFKPGKELRERVDGRAGEPLKND.

Belongs to the bacterial histone-like protein family. In terms of assembly, heterodimer of an alpha and a beta chain.

In terms of biological role, this protein is one of the two subunits of integration host factor, a specific DNA-binding protein that functions in genetic recombination as well as in transcriptional and translational control. In Burkholderia pseudomallei (strain K96243), this protein is Integration host factor subunit beta.